We begin with the raw amino-acid sequence, 412 residues long: NAD-dependent dihydropyrimidine dehydrogenase subunit PreT (412 aa).

Glu-286 contributes to the NAD(+) binding site.

It belongs to the NADH dehydrogenase family. In terms of assembly, heterotetramer of 2 PreA and 2 PreT subunits.

The catalysed reaction is 5,6-dihydrouracil + NAD(+) = uracil + NADH + H(+). It catalyses the reaction 5,6-dihydrothymine + NAD(+) = thymine + NADH + H(+). In terms of biological role, involved in pyrimidine base degradation. Catalyzes physiologically the reduction of uracil to 5,6-dihydrouracil (DHU) by using NADH as a specific cosubstrate. It also catalyzes the reverse reaction and the reduction of thymine to 5,6-dihydrothymine (DHT). This Escherichia coli O157:H7 protein is NAD-dependent dihydropyrimidine dehydrogenase subunit PreT (preT).